A 195-amino-acid chain; its full sequence is Probable GTP-binding protein EngB (195 aa).

The EngB-type G domain maps to 24–195; it reads GLSEVALSGR…QIWDLIANYL (172 aa). GTP is bound by residues 32–39, 59–63, 77–80, 144–147, and 176–178; these read GRSNVGKS, GKTQT, DVPG, TKED, and YSS. Residues Ser39 and Thr61 each contribute to the Mg(2+) site.

This sequence belongs to the TRAFAC class TrmE-Era-EngA-EngB-Septin-like GTPase superfamily. EngB GTPase family. It depends on Mg(2+) as a cofactor.

Necessary for normal cell division and for the maintenance of normal septation. This is Probable GTP-binding protein EngB from Staphylococcus haemolyticus (strain JCSC1435).